We begin with the raw amino-acid sequence, 888 residues long: Calcium-transporting ATPase 1 (888 aa).

Helical transmembrane passes span 53-75 (IFAQ…SAFV), 79-97 (ADAS…IGVV), 246-266 (VGKY…LIGF), and 283-303 (AVAA…AIGV). Ca(2+) is bound by residues V284, A285, I287, and E289. D331 acts as the 4-aspartylphosphate intermediate in catalysis. The next 6 helical transmembrane spans lie at 675 to 695 (ILFL…AILL), 703 to 723 (PIHI…SLGV), 747 to 767 (VPFL…AFIA), 791 to 811 (LLHA…VHSF), 831 to 851 (LVFS…IPPL), and 865 to 885 (WGFV…IKLA). 2 residues coordinate Ca(2+): N710 and D714.

Belongs to the cation transport ATPase (P-type) (TC 3.A.3) family. Type IIA subfamily.

The protein localises to the cell membrane. It catalyses the reaction Ca(2+)(in) + ATP + H2O = Ca(2+)(out) + ADP + phosphate + H(+). Its activity is regulated as follows. Inhibited by cyclopiazonic acid (CPA). In terms of biological role, catalyzes the hydrolysis of ATP coupled with the transport of calcium. This Bacillus cereus (strain ATCC 10987 / NRS 248) protein is Calcium-transporting ATPase 1.